The sequence spans 222 residues: MKEVQIEAGWKKVLQEEFDKFYFEKLTDFVREEYRQSPIYPPARFIFRAFDTCPFDRVKVVILGQDPYHEPGQAEGLAFSVPTGIPIPPSLRNICEEIRTDTGQPAHIDGGSLLPWVEQGVLLLNATLTVRASQAGSHQGHGWETFTDAAIEALAKRREHLVFLLWGSYARRKSAMIDPRRHLILEAPHPSPLSAHRGFFGCKHFSRTNAYLRQHGIAPIVW.

Aspartate 66 functions as the Proton acceptor in the catalytic mechanism.

It belongs to the uracil-DNA glycosylase (UDG) superfamily. UNG family.

It localises to the cytoplasm. The catalysed reaction is Hydrolyzes single-stranded DNA or mismatched double-stranded DNA and polynucleotides, releasing free uracil.. Excises uracil residues from the DNA which can arise as a result of misincorporation of dUMP residues by DNA polymerase or due to deamination of cytosine. The polypeptide is Uracil-DNA glycosylase (Porphyromonas gingivalis (strain ATCC 33277 / DSM 20709 / CIP 103683 / JCM 12257 / NCTC 11834 / 2561)).